Reading from the N-terminus, the 38-residue chain is Large ribosomal subunit protein bL36A (38 aa).

The protein belongs to the bacterial ribosomal protein bL36 family.

This Pseudomonas aeruginosa (strain UCBPP-PA14) protein is Large ribosomal subunit protein bL36A.